Here is a 338-residue protein sequence, read N- to C-terminus: Aspartate carbamoyltransferase catalytic subunit (338 aa).

Positions 57 and 58 each coordinate carbamoyl phosphate. L-aspartate is bound at residue lysine 86. Carbamoyl phosphate-binding residues include arginine 107, histidine 135, and glutamine 138. Residues arginine 172 and arginine 234 each contribute to the L-aspartate site. Leucine 274 and proline 275 together coordinate carbamoyl phosphate.

Belongs to the aspartate/ornithine carbamoyltransferase superfamily. ATCase family. As to quaternary structure, heterododecamer (2C3:3R2) of six catalytic PyrB chains organized as two trimers (C3), and six regulatory PyrI chains organized as three dimers (R2).

The catalysed reaction is carbamoyl phosphate + L-aspartate = N-carbamoyl-L-aspartate + phosphate + H(+). Its pathway is pyrimidine metabolism; UMP biosynthesis via de novo pathway; (S)-dihydroorotate from bicarbonate: step 2/3. Catalyzes the condensation of carbamoyl phosphate and aspartate to form carbamoyl aspartate and inorganic phosphate, the committed step in the de novo pyrimidine nucleotide biosynthesis pathway. This Cellvibrio japonicus (strain Ueda107) (Pseudomonas fluorescens subsp. cellulosa) protein is Aspartate carbamoyltransferase catalytic subunit.